A 386-amino-acid chain; its full sequence is DNA (cytosine-5)-methyltransferase 3-like (386 aa).

One can recognise an ADD domain in the interval 41 to 173 (EVKANQRNIE…LKAFYDRESE (133 aa)). A GATA-type; atypical zinc finger spans residues 52–82 (ICICCGSLQVHTQHPLFEGGICAPCKDKFLD). The PHD-type; atypical zinc-finger motif lies at 93-149 (QSYCSICCSGETLLICGNPDCTRCYCFECVDSLVGPGTSGKVHAMSNWVCYLCLPSS).

Homodimer. Heterotetramer composed of 1 DNMT3A homodimer and 2 DNMT3L subunits (DNMT3L-DNMT3A-DNMT3A-DNMT3L). Interacts with histone H3 (via N-terminus); interaction is strongly inhibited by methylation at lysine 4 (H3K4me). Interacts with EZH2; the interaction is direct. Interacts with SPOCD1. Expressed at low levels in several tissues including testis, ovary, and thymus.

The protein localises to the nucleus. In terms of biological role, catalytically inactive regulatory factor of DNA methyltransferases that can either promote or inhibit DNA methylation depending on the context. Essential for the function of DNMT3A and DNMT3B: activates DNMT3A and DNMT3B by binding to their catalytic domain. Acts by accelerating the binding of DNA and S-adenosyl-L-methionine (AdoMet) to the methyltransferases and dissociates from the complex after DNA binding to the methyltransferases. Recognizes unmethylated histone H3 lysine 4 (H3K4me0) and induces de novo DNA methylation by recruitment or activation of DNMT3. Plays a key role in embryonic stem cells and germ cells. In germ cells, required for the methylation of imprinted loci together with DNMT3A. In male germ cells, specifically required to methylate retrotransposons, preventing their mobilization. Plays a key role in embryonic stem cells (ESCs) by acting both as an positive and negative regulator of DNA methylation. While it promotes DNA methylation of housekeeping genes together with DNMT3A and DNMT3B, it also acts as an inhibitor of DNA methylation at the promoter of bivalent genes. Interacts with the EZH2 component of the PRC2/EED-EZH2 complex, preventing interaction of DNMT3A and DNMT3B with the PRC2/EED-EZH2 complex, leading to maintain low methylation levels at the promoters of bivalent genes. Promotes differentiation of ESCs into primordial germ cells by inhibiting DNA methylation at the promoter of RHOX5, thereby activating its expression. This Homo sapiens (Human) protein is DNA (cytosine-5)-methyltransferase 3-like (DNMT3L).